The following is a 107-amino-acid chain: MGKIRKNDTVVVLSGDDKGKQGAVLELIPAKKAAIVKGVNIKTKHRKPSNKNTNGEIITFEAPILLSKLALVAKKATKDKPAIPTRVGFKIENKKKIRIAKKTGKAI.

The protein belongs to the universal ribosomal protein uL24 family. In terms of assembly, part of the 50S ribosomal subunit.

Its function is as follows. One of two assembly initiator proteins, it binds directly to the 5'-end of the 23S rRNA, where it nucleates assembly of the 50S subunit. In terms of biological role, one of the proteins that surrounds the polypeptide exit tunnel on the outside of the subunit. This chain is Large ribosomal subunit protein uL24, found in Mesomycoplasma hyopneumoniae (strain 7448) (Mycoplasma hyopneumoniae).